Consider the following 206-residue polypeptide: Small ribosomal subunit protein uS5 (206 aa).

The segment covering 1-15 (MTDTPTKQETQSNKD) has biased composition (polar residues). The segment at 1–50 (MTDTPTKQETQSNKDNVPGAIPVEQKKNNRNDRKRNRRGDSKNLERDSDW) is disordered. Basic and acidic residues predominate over residues 38-50 (RGDSKNLERDSDW). The region spanning 50–113 (WQERVVQIRR…SDGKKNLVRV (64 aa)) is the S5 DRBM domain.

This sequence belongs to the universal ribosomal protein uS5 family. Part of the 30S ribosomal subunit. Contacts proteins S4 and S8.

In terms of biological role, with S4 and S12 plays an important role in translational accuracy. Located at the back of the 30S subunit body where it stabilizes the conformation of the head with respect to the body. This is Small ribosomal subunit protein uS5 from Prochlorococcus marinus (strain MIT 9215).